The following is a 154-amino-acid chain: Myoglobin (154 aa).

Residues 2–148 (GLSDGEWQLV…FRNDIAAKYK (147 aa)) form the Globin domain. The residue at position 4 (Ser-4) is a Phosphoserine. Nitrite is bound at residue His-65. An O2-binding site is contributed by His-65. Residue Thr-68 is modified to Phosphothreonine. His-94 is a binding site for heme b.

It belongs to the globin family. As to quaternary structure, monomeric.

It localises to the cytoplasm. The protein resides in the sarcoplasm. It carries out the reaction Fe(III)-heme b-[protein] + nitric oxide + H2O = Fe(II)-heme b-[protein] + nitrite + 2 H(+). The catalysed reaction is H2O2 + AH2 = A + 2 H2O. In terms of biological role, monomeric heme protein which primary function is to store oxygen and facilitate its diffusion within muscle tissues. Reversibly binds oxygen through a pentacoordinated heme iron and enables its timely and efficient release as needed during periods of heightened demand. Depending on the oxidative conditions of tissues and cells, and in addition to its ability to bind oxygen, it also has a nitrite reductase activity whereby it regulates the production of bioactive nitric oxide. Under stress conditions, like hypoxia and anoxia, it also protects cells against reactive oxygen species thanks to its pseudoperoxidase activity. The chain is Myoglobin (MB) from Ctenodactylus gundi (Northern gundi).